The following is a 432-amino-acid chain: Lipoyl synthase, mitochondrial (432 aa).

The segment covering 32-68 (TLGATPGSTSTSTSTSTATTTTLESTSTSTSGDATET) has biased composition (low complexity). Residues 32–71 (TLGATPGSTSTSTSTSTATTTTLESTSTSTSGDATETTIK) form a disordered region. The [4Fe-4S] cluster site is built by Cys-150, Cys-155, Cys-161, Cys-180, Cys-184, Cys-187, and Ser-395. Residues 165-384 (KKSEATATIM…RDVALEMGFL (220 aa)) enclose the Radical SAM core domain.

Belongs to the radical SAM superfamily. Lipoyl synthase family. [4Fe-4S] cluster serves as cofactor.

The protein resides in the mitochondrion. The enzyme catalyses [[Fe-S] cluster scaffold protein carrying a second [4Fe-4S](2+) cluster] + N(6)-octanoyl-L-lysyl-[protein] + 2 oxidized [2Fe-2S]-[ferredoxin] + 2 S-adenosyl-L-methionine + 4 H(+) = [[Fe-S] cluster scaffold protein] + N(6)-[(R)-dihydrolipoyl]-L-lysyl-[protein] + 4 Fe(3+) + 2 hydrogen sulfide + 2 5'-deoxyadenosine + 2 L-methionine + 2 reduced [2Fe-2S]-[ferredoxin]. It participates in protein modification; protein lipoylation via endogenous pathway; protein N(6)-(lipoyl)lysine from octanoyl-[acyl-carrier-protein]: step 2/2. In terms of biological role, catalyzes the radical-mediated insertion of two sulfur atoms into the C-6 and C-8 positions of the octanoyl moiety bound to the lipoyl domains of lipoate-dependent enzymes, thereby converting the octanoylated domains into lipoylated derivatives. This is Lipoyl synthase, mitochondrial from Lodderomyces elongisporus (strain ATCC 11503 / CBS 2605 / JCM 1781 / NBRC 1676 / NRRL YB-4239) (Yeast).